The chain runs to 510 residues: Ribonuclease Y (510 aa).

Residues 2 to 22 form a helical membrane-spanning segment; it reads IYIIFSSIFAGFILGFLVRVF. In terms of domain architecture, KH spans 198–258; it reads TVASVELPND…IRKELAKRTL (61 aa). Residues 324–419 enclose the HD domain; that stretch reads VLSHSKETAI…VQIADAISAS (96 aa).

This sequence belongs to the RNase Y family.

It is found in the cell membrane. Endoribonuclease that initiates mRNA decay. This Borreliella burgdorferi (strain ATCC 35210 / DSM 4680 / CIP 102532 / B31) (Borrelia burgdorferi) protein is Ribonuclease Y.